The primary structure comprises 123 residues: Large ribosomal subunit protein eL8 (123 aa).

This sequence belongs to the eukaryotic ribosomal protein eL8 family. Part of the 50S ribosomal subunit. Probably part of the RNase P complex.

Its subcellular location is the cytoplasm. Its function is as follows. Multifunctional RNA-binding protein that recognizes the K-turn motif in ribosomal RNA, the RNA component of RNase P, box H/ACA, box C/D and box C'/D' sRNAs. The chain is Large ribosomal subunit protein eL8 from Methanothermobacter thermautotrophicus (strain ATCC 29096 / DSM 1053 / JCM 10044 / NBRC 100330 / Delta H) (Methanobacterium thermoautotrophicum).